The primary structure comprises 759 residues: MAWSQVEISKPHLAYAIIGGFTSLFMLCSLIIKEKLFLGEATMATATGLIFGPYVAKLFVPTSWGNTDYITEELARVLLVVEVFAAGAELPRAYMLRHWRSMFVMLLPVMIFGWLVSTGFMYALIPRLSFLESLAIAACITATDPVLASSIVGKGKFARRVPGHLRNMLLAESGCNDGMAIPFLYLAIYLIIEKPARHAGRDWVCIIILYECTFGCVLGAIIGVIARKMIKFSERRGLMDRESFLVFYFVLALFCGGIGTIIGVDDLLVSFCAGAAFSWDSWFSKKTEESHVSNVIDLLLNLSFFVYVGAIMPWPQFHMPHMDLSVWRLVVLAICILIARRIPAVLLFKSFVPDIINWREALFAGHFGPIGVGALYTCLVARAELEVHSTVPEPNDAIENPEIPNWYCIQVMWPVVCFLVLSSIIVHGSSIAFFMLGKRINTLALSFTRTRDSHFAFNLPRVRQGQSLPIKRVDALRSSANSIASSIRRRHPVNIQEDEDADISTVSLPEAAHLREERAESPRGGHYDAEEFPSEDYESRQPRRSNEEDREEEMNPGDETYLIGEDLVVEDSQGNIISHTSSRDANGPSIDEKLAQGDPKAKSFGRKFRSFLRRSYDTFQRNLHEPDDERQREPTLGHIESSIENHRPRYSRQNSESHLRENSVERRRREQVLTNIGDSESEDDNIPRPGIVPFYNENNESSSDTRNGLLSDNVSESRSRRPSRAPSAAVSSEGSPVEEDNEAQHRPNIRFLELTRAWE.

11 helical membrane passes run 12-32 (HLAY…SLII), 36-56 (LFLG…PYVA), 105-125 (MLLP…YALI), 133-153 (SLAI…SIVG), 172-192 (ESGC…YLII), 206-226 (IIIL…GVIA), 244-264 (FLVF…IIGV), 295-315 (VIDL…MPWP), 319-339 (MPHM…ILIA), 361-381 (ALFA…CLVA), and 415-435 (VVCF…AFFM). The residue at position 442 (Thr-442) is a Phosphothreonine. Ser-446 bears the Phosphoserine mark. Residue Thr-448 is modified to Phosphothreonine. 5 stretches are compositionally biased toward basic and acidic residues: residues 514–529 (LREE…HYDA), 537–547 (YESRQPRRSNE), 590–601 (IDEKLAQGDPKA), 622–647 (NLHE…ENHR), and 655–671 (SESH…RREQ). Disordered stretches follow at residues 514-558 (LREE…NPGD), 578-606 (SHTS…SFGR), and 622-759 (NLHE…RAWE). The segment covering 696–713 (NENNESSSDTRNGLLSDN) has biased composition (polar residues). N-linked (GlcNAc...) asparagine glycans are attached at residues Asn-699 and Asn-713. Low complexity predominate over residues 724–733 (RAPSAAVSSE). The residue at position 735 (Ser-735) is a Phosphoserine.

It belongs to the fungal Na(+)/H(+) exchanger family.

The protein resides in the membrane. Sodium export from cell, takes up external protons in exchange for internal sodium ions. The chain is Probable Na(+)/H(+) antiporter C3A11.09 (sod22) from Schizosaccharomyces pombe (strain 972 / ATCC 24843) (Fission yeast).